The following is a 353-amino-acid chain: Photosystem II protein D1 (353 aa).

N-acetylthreonine is present on Thr2. The residue at position 2 (Thr2) is a Phosphothreonine. 3 consecutive transmembrane segments (helical) span residues 29–46, 118–133, and 142–156; these read YIGWFGVLMIPTLLTATS, HFLLGVACYMGREWEL, and WIAVAYSAPVAAATA. His118 provides a ligand contact to chlorophyll a. Residue Tyr126 participates in pheophytin a binding. Residues Asp170 and Glu189 each contribute to the [CaMn4O5] cluster site. The chain crosses the membrane as a helical span at residues 197–218; it reads FHMLGVAGVFGGSLFSAMHGSL. His198 serves as a coordination point for chlorophyll a. Residues His215 and 264–265 contribute to the a quinone site; that span reads SF. His215 provides a ligand contact to Fe cation. His272 lines the Fe cation pocket. Residues 274-288 form a helical membrane-spanning segment; the sequence is FLAAWPVVGIWFTAL. Positions 332, 333, 342, and 344 each coordinate [CaMn4O5] cluster. A propeptide spanning residues 345-353 is cleaved from the precursor; sequence SVEAPSINA.

This sequence belongs to the reaction center PufL/M/PsbA/D family. In terms of assembly, PSII is composed of 1 copy each of membrane proteins PsbA, PsbB, PsbC, PsbD, PsbE, PsbF, PsbH, PsbI, PsbJ, PsbK, PsbL, PsbM, PsbT, PsbX, PsbY, PsbZ, Psb30/Ycf12, at least 3 peripheral proteins of the oxygen-evolving complex and a large number of cofactors. It forms dimeric complexes. The D1/D2 heterodimer binds P680, chlorophylls that are the primary electron donor of PSII, and subsequent electron acceptors. It shares a non-heme iron and each subunit binds pheophytin, quinone, additional chlorophylls, carotenoids and lipids. D1 provides most of the ligands for the Mn4-Ca-O5 cluster of the oxygen-evolving complex (OEC). There is also a Cl(-1) ion associated with D1 and D2, which is required for oxygen evolution. The PSII complex binds additional chlorophylls, carotenoids and specific lipids. is required as a cofactor. Tyr-161 forms a radical intermediate that is referred to as redox-active TyrZ, YZ or Y-Z. Post-translationally, C-terminally processed by CTPA; processing is essential to allow assembly of the oxygen-evolving complex and thus photosynthetic growth.

The protein resides in the plastid. It localises to the chloroplast thylakoid membrane. The enzyme catalyses 2 a plastoquinone + 4 hnu + 2 H2O = 2 a plastoquinol + O2. Its function is as follows. Photosystem II (PSII) is a light-driven water:plastoquinone oxidoreductase that uses light energy to abstract electrons from H(2)O, generating O(2) and a proton gradient subsequently used for ATP formation. It consists of a core antenna complex that captures photons, and an electron transfer chain that converts photonic excitation into a charge separation. The D1/D2 (PsbA/PsbD) reaction center heterodimer binds P680, the primary electron donor of PSII as well as several subsequent electron acceptors. This is Photosystem II protein D1 from Chara vulgaris (Common stonewort).